Consider the following 151-residue polypeptide: C-C motif chemokine 25 (151 aa).

The N-terminal stretch at M1–A23 is a signal peptide. Cystine bridges form between C30–C58 and C31–C75. Residues R93–P151 form a disordered region.

This sequence belongs to the intercrine beta (chemokine CC) family.

It localises to the secreted. Functionally, potentially involved in T-cell development. Recombinant protein shows chemotactic activity on thymocytes, macrophages, THP-1 cells, and dendritics cells but is inactive on peripheral blood lymphocytes and neutrophils. Binds to CCR9. Binds to atypical chemokine receptor ACKR4 and mediates the recruitment of beta-arrestin (ARRB1/2) to ACKR4. The sequence is that of C-C motif chemokine 25 (CCL25) from Sus scrofa (Pig).